Reading from the N-terminus, the 302-residue chain is Glycine--tRNA ligase alpha subunit (302 aa).

This sequence belongs to the class-II aminoacyl-tRNA synthetase family. In terms of assembly, tetramer of two alpha and two beta subunits.

It is found in the cytoplasm. The enzyme catalyses tRNA(Gly) + glycine + ATP = glycyl-tRNA(Gly) + AMP + diphosphate. The polypeptide is Glycine--tRNA ligase alpha subunit (Xanthomonas oryzae pv. oryzae (strain MAFF 311018)).